A 357-amino-acid chain; its full sequence is Probable RNA methyltransferase Daro_1157 (357 aa).

E91 serves as the catalytic Proton acceptor. In terms of domain architecture, Radical SAM core spans 94–320 (LLPRDGLCIS…TTVRNSAGQD (227 aa)). C101 and C325 are disulfide-bonded. The [4Fe-4S] cluster site is built by C108, C112, and C115. S-adenosyl-L-methionine contacts are provided by residues 153–154 (GE), S183, 206–208 (SLH), and N282. The S-methylcysteine intermediate role is filled by C325.

The protein belongs to the radical SAM superfamily. RlmN family. The cofactor is [4Fe-4S] cluster.

It localises to the cytoplasm. The chain is Probable RNA methyltransferase Daro_1157 from Dechloromonas aromatica (strain RCB).